Here is a 38-residue protein sequence, read N- to C-terminus: Photosystem II reaction center protein L (38 aa).

The helical transmembrane segment at 17–37 threads the bilayer; sequence SLYWGLLLIFVLAILFSNYFF.

The protein belongs to the PsbL family. As to quaternary structure, PSII is composed of 1 copy each of membrane proteins PsbA, PsbB, PsbC, PsbD, PsbE, PsbF, PsbH, PsbI, PsbJ, PsbK, PsbL, PsbM, PsbT, PsbX, PsbY, PsbZ, Psb30/Ycf12, at least 3 peripheral proteins of the oxygen-evolving complex and a large number of cofactors. It forms dimeric complexes.

The protein resides in the plastid. The protein localises to the chloroplast thylakoid membrane. Its function is as follows. One of the components of the core complex of photosystem II (PSII). PSII is a light-driven water:plastoquinone oxidoreductase that uses light energy to abstract electrons from H(2)O, generating O(2) and a proton gradient subsequently used for ATP formation. It consists of a core antenna complex that captures photons, and an electron transfer chain that converts photonic excitation into a charge separation. This subunit is found at the monomer-monomer interface and is required for correct PSII assembly and/or dimerization. The polypeptide is Photosystem II reaction center protein L (Aethionema cordifolium (Lebanon stonecress)).